A 533-amino-acid chain; its full sequence is CWF19-like protein 1 homolog (533 aa).

Residues 290–314 form a disordered region; that stretch reads EMGGAEDGAGNGRKRHNDGGNDGPR.

This sequence belongs to the CWF19 family.

This chain is CWF19-like protein 1 homolog, found in Caenorhabditis elegans.